The sequence spans 306 residues: B- and T-lymphocyte attenuator (306 aa).

An N-terminal signal peptide occupies residues 1–29 (MKTVPAMLGTPRLFREFFILHLGLWSILC). The Extracellular portion of the chain corresponds to 30–183 (EKATKRNDEE…ERPGRTWLLY (154 aa)). Positions 37-139 (DEECPVQLTI…SQVINSHSVT (103 aa)) constitute an Ig-like V-type domain. 3 disulfides stabilise this stretch: cysteine 40-cysteine 69, cysteine 64-cysteine 124, and cysteine 78-cysteine 85. 6 N-linked (GlcNAc...) asparagine glycosylation sites follow: asparagine 74, asparagine 81, asparagine 101, asparagine 119, asparagine 148, and asparagine 165. Residues 184–204 (TLLPLGALLLLLACVCLLCFL) traverse the membrane as a helical segment. Over 205 to 306 (KRIQGKEKKP…TEYASICVRS (102 aa)) the chain is Cytoplasmic.

As to quaternary structure, interacts with tyrosine phosphatases PTPN6/SHP-1 and PTPN11/SHP-2. Interacts with TNFRSF14/HVEM (via cysteine-rich domain 1). In terms of processing, phosphorylated on Tyr residues by TNFRSF14 and by antigen receptors cross-linking, both inducing association with PTPN6 and PTPN11. Post-translationally, N-glycosylated. Expressed in splenic T- and B-cells as well as lymph node tissues but very weakly in somatic tissues. Also expressed in macrophages, NK cells and dendritic cells. A polymorphic tissue distribution between several strains is seen.

It localises to the cell membrane. Its function is as follows. Inhibitory receptor on lymphocytes that negatively regulates antigen receptor signaling via PTPN6/SHP-1 and PTPN11/SHP-2. May interact in cis (on the same cell) or in trans (on other cells) with TNFRSF14. In cis interactions, appears to play an immune regulatory role inhibiting in trans interactions in naive T cells to maintain a resting state. In trans interactions, can predominate during adaptive immune response to provide survival signals to effector T cells. The sequence is that of B- and T-lymphocyte attenuator from Mus musculus (Mouse).